The chain runs to 137 residues: Proofreading thioesterase EntH (137 aa).

The active-site Nucleophile or proton acceptor is E63.

This sequence belongs to the thioesterase PaaI family. As to quaternary structure, homotetramer. Dimer of dimers. Interacts specifically with the aryl carrier protein (ArCP) domain of EntB.

The protein resides in the cytoplasm. It functions in the pathway siderophore biosynthesis; enterobactin biosynthesis. Functionally, required for optimal enterobactin synthesis. Acts as a proofreading enzyme that prevents EntB misacylation by hydrolyzing the thioester bound existing between EntB and wrongly charged molecules. The protein is Proofreading thioesterase EntH (entH) of Klebsiella pneumoniae subsp. pneumoniae (strain ATCC 700721 / MGH 78578).